The following is a 345-amino-acid chain: G-protein coupled receptor str-33 (345 aa).

Topologically, residues 1 to 11 (MTVNLRDLSRT) are extracellular. A helical transmembrane segment spans residues 12-32 (IAEFAFLTALVCNSLLIYLTA). At 33-37 (RRTKN) the chain is on the cytoplasmic side. A helical transmembrane segment spans residues 38–58 (ITGAYKYMIILFALLGLIFSC). The Extracellular segment spans residues 59–92 (TEMLARPFVHNFNASFVYFSLSNDLSEFKSLVQM). N-linked (GlcNAc...) asparagine glycosylation is present at Asn-71. The helical transmembrane segment at 93–113 (LLVLYSGLYSSLISFVAVQFI) threads the bilayer. Residues 114–133 (YRYMVLVNANLLESWFTGWK) are Cytoplasmic-facing. Residues 134–154 (LVFWVFYVIFFGFAWSASVYF) traverse the membrane as a helical segment. The Extracellular segment spans residues 155 to 204 (CLFPDTYSYNYIRTEFKDVYNIGVDRVAIFILVAYEKHPSSEEYKLRPAS). A helical membrane pass occupies residues 205 to 225 (VIMIAGTISILVIQYSIMLFC). At 226-258 (GASMHRQMNEKLKNFSPDNQRLQKQFFKTLLLQ) the chain is on the cytoplasmic side. The chain crosses the membrane as a helical span at residues 259-279 (ISVPTVLFHMPIFPVLLGPFF). Over 280-288 (NFEISAESG) the chain is Extracellular. A helical membrane pass occupies residues 289 to 309 (IIYSLFSLYPPIDGLIIMTVV). Over 310-345 (TDYRIALTELFLGSHSGAQVEVIPVEVVSILNFSLL) the chain is Cytoplasmic.

Belongs to the nematode receptor-like protein str family. In terms of tissue distribution, detected in ALM and PLM mechanosensory neurons and head neurons.

The protein localises to the cell membrane. In terms of biological role, regulates egg-laying and locomotion. Likely to act upstream of goa-1 to suppress 5-hydroxytryptamine (5-HT) biosynthesis in hermaphrodite-specific neurons (HSNs) through inhibition of tph-1 transcription. This Caenorhabditis elegans protein is G-protein coupled receptor str-33.